We begin with the raw amino-acid sequence, 292 residues long: 4-hydroxy-tetrahydrodipicolinate synthase (292 aa).

Pyruvate is bound at residue Thr-45. The Proton donor/acceptor role is filled by Tyr-133. Residue Lys-161 is the Schiff-base intermediate with substrate of the active site. A pyruvate-binding site is contributed by Ile-203.

This sequence belongs to the DapA family. Homotetramer; dimer of dimers.

The protein localises to the cytoplasm. The catalysed reaction is L-aspartate 4-semialdehyde + pyruvate = (2S,4S)-4-hydroxy-2,3,4,5-tetrahydrodipicolinate + H2O + H(+). The protein operates within amino-acid biosynthesis; L-lysine biosynthesis via DAP pathway; (S)-tetrahydrodipicolinate from L-aspartate: step 3/4. Its function is as follows. Catalyzes the condensation of (S)-aspartate-beta-semialdehyde [(S)-ASA] and pyruvate to 4-hydroxy-tetrahydrodipicolinate (HTPA). The protein is 4-hydroxy-tetrahydrodipicolinate synthase of Vibrio vulnificus (strain YJ016).